The following is a 156-amino-acid chain: RNA polymerase sigma factor SigS (156 aa).

The short motif at 29–44 (EYYQLLLIKMWQLSQI) is the Polymerase core binding element. Residues 126–145 (QFEIAEIMSLSLSTIKLIKM) constitute a DNA-binding region (H-T-H motif).

The protein belongs to the sigma-70 factor family.

Functionally, sigma factors are initiation factors that promote the attachment of RNA polymerase to specific initiation sites and are then released. Sigma-S contributes to the protection against external stress, thus playing a role in cellular fitness and survival. The polypeptide is RNA polymerase sigma factor SigS (sigS) (Staphylococcus aureus (strain NCTC 8325 / PS 47)).